A 263-amino-acid chain; its full sequence is Small ribosomal subunit protein eS4 (263 aa).

The S4 RNA-binding domain occupies 42–104; sequence LPLIIFLRNK…TGENFRLIYD (63 aa). A Glycyl lysine isopeptide (Lys-Gly) (interchain with G-Cter in SUMO2) cross-link involves residue Lys230. N6-acetyllysine is present on Lys233.

Belongs to the eukaryotic ribosomal protein eS4 family. As to quaternary structure, component of the small ribosomal subunit. Part of the small subunit (SSU) processome, composed of more than 70 proteins and the RNA chaperone small nucleolar RNA (snoRNA) U3. Identified in a IGF2BP1-dependent mRNP granule complex containing untranslated mRNAs.

It is found in the cytoplasm. It localises to the nucleus. The protein resides in the nucleolus. Functionally, component of the small ribosomal subunit. The ribosome is a large ribonucleoprotein complex responsible for the synthesis of proteins in the cell. Part of the small subunit (SSU) processome, first precursor of the small eukaryotic ribosomal subunit. During the assembly of the SSU processome in the nucleolus, many ribosome biogenesis factors, an RNA chaperone and ribosomal proteins associate with the nascent pre-rRNA and work in concert to generate RNA folding, modifications, rearrangements and cleavage as well as targeted degradation of pre-ribosomal RNA by the RNA exosome. The sequence is that of Small ribosomal subunit protein eS4 (RPS4X) from Oryctolagus cuniculus (Rabbit).